We begin with the raw amino-acid sequence, 469 residues long: TKASVGFKAGVKDYKLTYYTPDYETKDTDILAAFRMSPQPGVPPEEAGAAVAAESSTGTWTTVWTDGLTSLDRYKGRCYHIEPVAGEENQYIAYVAYPLDLFEEGSVTNMFTSIVGNVFGFKALRALRLEDLRIPVAYVKTFQGPPHGIQVERDKLNKYGRPLLGCTIKPKLGLSAKNYGRAVYECLRGGLDFTKDDENVNSQPFMRWRDRFVFCAEAIYKAQAETGEIKGHYLNATAGTCEEMMKRAVFARELGVPIVMHDYLTGGFTANTTLAHYCRDNGLLLHIHRAMHAVIDRQKNHGMHFRVLAKALRMSGGDHIHAGTVVGKLEGERDITLGFVDLLRDDFIEKDRSRGIFFTQDWVSLPGVLPVASGGIHVWHMPALTEIFGDDSVLQFGGGTLGHPWGNAPGAVANRVALEACVQARNEGRDLASEGNAIIREASKWSPELAAACEIWKEIKFEFPAMDTL.

K8 is modified (N6,N6,N6-trimethyllysine). Substrate contacts are provided by N117 and T167. Residue K169 is the Proton acceptor of the active site. Residue K171 participates in substrate binding. Mg(2+) is bound by residues K195, D197, and E198. At K195 the chain carries N6-carboxylysine. H288 acts as the Proton acceptor in catalysis. 3 residues coordinate substrate: R289, H321, and S373.

Belongs to the RuBisCO large chain family. Type I subfamily. Heterohexadecamer of 8 large chains and 8 small chains; disulfide-linked. The disulfide link is formed within the large subunit homodimers. Mg(2+) serves as cofactor. Post-translationally, the disulfide bond which can form in the large chain dimeric partners within the hexadecamer appears to be associated with oxidative stress and protein turnover.

The protein localises to the plastid. The protein resides in the chloroplast. The catalysed reaction is 2 (2R)-3-phosphoglycerate + 2 H(+) = D-ribulose 1,5-bisphosphate + CO2 + H2O. It carries out the reaction D-ribulose 1,5-bisphosphate + O2 = 2-phosphoglycolate + (2R)-3-phosphoglycerate + 2 H(+). Functionally, ruBisCO catalyzes two reactions: the carboxylation of D-ribulose 1,5-bisphosphate, the primary event in carbon dioxide fixation, as well as the oxidative fragmentation of the pentose substrate in the photorespiration process. Both reactions occur simultaneously and in competition at the same active site. This is Ribulose bisphosphate carboxylase large chain from Akania bidwillii (Turnipwood).